Reading from the N-terminus, the 159-residue chain is 2-C-methyl-D-erythritol 2,4-cyclodiphosphate synthase (159 aa).

A divalent metal cation is bound by residues D10 and H12. Residues 10–12 and 36–37 contribute to the 4-CDP-2-C-methyl-D-erythritol 2-phosphate site; these read DVH and HS. Residue H44 coordinates a divalent metal cation. 4-CDP-2-C-methyl-D-erythritol 2-phosphate is bound by residues 58–60, 63–67, 102–108, 134–137, F141, and R144; these read DIG, FPDTD, AQAPKMA, and TTTE.

The protein belongs to the IspF family. In terms of assembly, homotrimer. Requires a divalent metal cation as cofactor.

The enzyme catalyses 4-CDP-2-C-methyl-D-erythritol 2-phosphate = 2-C-methyl-D-erythritol 2,4-cyclic diphosphate + CMP. The protein operates within isoprenoid biosynthesis; isopentenyl diphosphate biosynthesis via DXP pathway; isopentenyl diphosphate from 1-deoxy-D-xylulose 5-phosphate: step 4/6. Involved in the biosynthesis of isopentenyl diphosphate (IPP) and dimethylallyl diphosphate (DMAPP), two major building blocks of isoprenoid compounds. Catalyzes the conversion of 4-diphosphocytidyl-2-C-methyl-D-erythritol 2-phosphate (CDP-ME2P) to 2-C-methyl-D-erythritol 2,4-cyclodiphosphate (ME-CPP) with a corresponding release of cytidine 5-monophosphate (CMP). This chain is 2-C-methyl-D-erythritol 2,4-cyclodiphosphate synthase, found in Idiomarina loihiensis (strain ATCC BAA-735 / DSM 15497 / L2-TR).